The sequence spans 68 residues: Arabinogalactan peptide 1 (68 aa).

Residues 1–30 (MAGQLKSKIVAVAVAAVVVVASSLVGTASA) form the signal peptide. The GPI-anchor amidated serine moiety is linked to residue Ser-40. Positions 41 to 68 (GATATAAAAPAFAAVSVAAAALGGYLFC) are cleaved as a propeptide — removed in mature form.

This sequence belongs to the AG-peptide AGP family. O-glycosylated on hydroxyprolines; noncontiguous hydroxylproline residues are glycosylated with arabinogalactan. In terms of tissue distribution, expressed in roots, stems, flowers and seeds.

The protein resides in the vacuole. It is found in the aleurone grain membrane. Its function is as follows. Proteoglycan that seems to be implicated in diverse developmental roles such as differentiation, cell-cell recognition, embryogenesis and programmed cell death. This Oryza sativa subsp. japonica (Rice) protein is Arabinogalactan peptide 1 (AGPEP1).